The following is a 623-amino-acid chain: Sulfite reductase [NADPH] flavoprotein alpha-component (623 aa).

The disordered stretch occupies residues 1-32 (MSFQKNEYSHKNVSEDNNGQGGNPPIASPLND). A Flavodoxin-like domain is found at 87–225 (LTIIFASQTG…AAEEWRKNAL (139 aa)). FMN-binding positions include 93-98 (SQTGNA), 140-143 (STNG), and 176-185 (LGDSSYEFFC). In terms of domain architecture, FAD-binding FR-type spans 258–472 (QNPYTATLLT…VEHNNNFKLP (215 aa)). Residues Thr-346, Ala-380, 410 to 413 (RLYS), 428 to 430 (TVG), Tyr-434, and 443 to 446 (GGAS) contribute to the FAD site. Residues 543 to 544 (SR), 549 to 553 (KVYVQ), and Asp-585 each bind NADP(+). Residue Tyr-623 coordinates FAD.

The protein belongs to the NADPH-dependent sulphite reductase flavoprotein subunit CysJ family. This sequence in the N-terminal section; belongs to the flavodoxin family. In the C-terminal section; belongs to the flavoprotein pyridine nucleotide cytochrome reductase family. Alpha(8)-beta(8). The alpha component is a flavoprotein, the beta component is a hemoprotein. The cofactor is FAD. Requires FMN as cofactor.

It catalyses the reaction hydrogen sulfide + 3 NADP(+) + 3 H2O = sulfite + 3 NADPH + 4 H(+). It functions in the pathway sulfur metabolism; hydrogen sulfide biosynthesis; hydrogen sulfide from sulfite (NADPH route): step 1/1. Its function is as follows. Component of the sulfite reductase complex that catalyzes the 6-electron reduction of sulfite to sulfide. This is one of several activities required for the biosynthesis of L-cysteine from sulfate. The flavoprotein component catalyzes the electron flow from NADPH -&gt; FAD -&gt; FMN to the hemoprotein component. The protein is Sulfite reductase [NADPH] flavoprotein alpha-component of Vibrio parahaemolyticus serotype O3:K6 (strain RIMD 2210633).